The chain runs to 274 residues: MQFSKMHGLGNDFVVVDGVTQNVFFTPETIRRLANRHCGIGFDQLLIVEAPYDPELDFHYRIFNADGSEVSQCGNGARCFARFVTLKGLTNKKDIAVSTQKGNMVLTVKDDNQIRVNMGEPIWEPAKIPFTANKFEKNYILRTDIQTVLCGAVSIGNPHCVVQVDDIQTANVEQLGPLLENHERFPERVNAGFMQIINKEHIKLRVYERGAGETQACGSGACAAVAVGIMQGLLNNNVQVDLPGGSLMIEWNGVGHPLYMTGEATHIYDGFITL.

N11, Q44, and N64 together coordinate substrate. C73 acts as the Proton donor in catalysis. Substrate contacts are provided by residues 74-75 (GN), N157, N190, and 208-209 (ER). C217 functions as the Proton acceptor in the catalytic mechanism. 218 to 219 (GS) serves as a coordination point for substrate.

The protein belongs to the diaminopimelate epimerase family. In terms of assembly, homodimer.

The protein resides in the cytoplasm. The enzyme catalyses (2S,6S)-2,6-diaminopimelate = meso-2,6-diaminopimelate. It participates in amino-acid biosynthesis; L-lysine biosynthesis via DAP pathway; DL-2,6-diaminopimelate from LL-2,6-diaminopimelate: step 1/1. In terms of biological role, catalyzes the stereoinversion of LL-2,6-diaminopimelate (L,L-DAP) to meso-diaminopimelate (meso-DAP), a precursor of L-lysine and an essential component of the bacterial peptidoglycan. This Haemophilus influenzae (strain PittEE) protein is Diaminopimelate epimerase.